We begin with the raw amino-acid sequence, 928 residues long: Isoleucine--tRNA ligase (928 aa).

The 'HIGH' region signature appears at 57 to 67 (PFANGNIHMGH). Glu552 contributes to the L-isoleucyl-5'-AMP binding site. The 'KMSKS' region motif lies at 593 to 597 (KMSKS). Lys596 lines the ATP pocket. Cys887, Cys890, Cys907, and Cys910 together coordinate Zn(2+).

Belongs to the class-I aminoacyl-tRNA synthetase family. IleS type 1 subfamily. Monomer. Zn(2+) serves as cofactor.

The protein localises to the cytoplasm. It catalyses the reaction tRNA(Ile) + L-isoleucine + ATP = L-isoleucyl-tRNA(Ile) + AMP + diphosphate. In terms of biological role, catalyzes the attachment of isoleucine to tRNA(Ile). As IleRS can inadvertently accommodate and process structurally similar amino acids such as valine, to avoid such errors it has two additional distinct tRNA(Ile)-dependent editing activities. One activity is designated as 'pretransfer' editing and involves the hydrolysis of activated Val-AMP. The other activity is designated 'posttransfer' editing and involves deacylation of mischarged Val-tRNA(Ile). This chain is Isoleucine--tRNA ligase, found in Latilactobacillus sakei subsp. sakei (strain 23K) (Lactobacillus sakei subsp. sakei).